Reading from the N-terminus, the 315-residue chain is Olfactory receptor 10H2 (315 aa).

Residues 1–25 are Extracellular-facing; that stretch reads MLGLNHTSMSEFILVGFSAFPHLQL. N-linked (GlcNAc...) asparagine glycosylation is present at N5. The helical transmembrane segment at 26 to 46 threads the bilayer; the sequence is MLFLLFLLMYLFTLLGNLLIM. Residues 47-54 are Cytoplasmic-facing; sequence ATVWSERS. Residues 55–75 traverse the membrane as a helical segment; the sequence is LHTPMYLFLCVLSVSEILYTV. Residues 76–99 lie on the Extracellular side of the membrane; it reads AIIPRMLADLLSTQRSIAFLACAS. C97 and C189 are joined by a disulfide. Residues 100 to 120 traverse the membrane as a helical segment; sequence QMFFSFSFGFTHSFLLTVMGY. Residues 121–139 lie on the Cytoplasmic side of the membrane; it reads DRYVAICHPLRYNVLMSPR. A helical transmembrane segment spans residues 140–160; it reads GCACLVGCSWAGGSVMGMVVT. The Extracellular segment spans residues 161-197; it reads SAIFQLTFCGSHEIQHFLCHVPPLLKLACGNNVPAVA. The helical transmembrane segment at 198–218 threads the bilayer; that stretch reads LGVGLVCIMALLGCFLLILLS. Residues 219-238 lie on the Cytoplasmic side of the membrane; it reads YAFIVADILKIPSAEGRNKA. A helical membrane pass occupies residues 239–259; sequence FSTCASHLIVVIVHYGFASVI. Residues 260-272 lie on the Extracellular side of the membrane; sequence YLKPKGPHSQEGD. A helical transmembrane segment spans residues 273 to 293; that stretch reads TLMATTYAVLTPFLSPIIFSL. At 294–315 the chain is on the cytoplasmic side; that stretch reads RNKELKVAMKRTFLSTLYSSGT.

This sequence belongs to the G-protein coupled receptor 1 family.

It localises to the cell membrane. Functionally, odorant receptor. This is Olfactory receptor 10H2 (OR10H2) from Homo sapiens (Human).